The primary structure comprises 156 residues: ATP synthase subunit b (156 aa).

Residues 11–31 (AIAFVLFVLFCMKYIWPPIMA) form a helical membrane-spanning segment.

This sequence belongs to the ATPase B chain family. F-type ATPases have 2 components, F(1) - the catalytic core - and F(0) - the membrane proton channel. F(1) has five subunits: alpha(3), beta(3), gamma(1), delta(1), epsilon(1). F(0) has three main subunits: a(1), b(2) and c(10-14). The alpha and beta chains form an alternating ring which encloses part of the gamma chain. F(1) is attached to F(0) by a central stalk formed by the gamma and epsilon chains, while a peripheral stalk is formed by the delta and b chains.

The protein resides in the cell inner membrane. Functionally, f(1)F(0) ATP synthase produces ATP from ADP in the presence of a proton or sodium gradient. F-type ATPases consist of two structural domains, F(1) containing the extramembraneous catalytic core and F(0) containing the membrane proton channel, linked together by a central stalk and a peripheral stalk. During catalysis, ATP synthesis in the catalytic domain of F(1) is coupled via a rotary mechanism of the central stalk subunits to proton translocation. Component of the F(0) channel, it forms part of the peripheral stalk, linking F(1) to F(0). The protein is ATP synthase subunit b of Yersinia enterocolitica serotype O:8 / biotype 1B (strain NCTC 13174 / 8081).